A 267-amino-acid polypeptide reads, in one-letter code: MEMRQPAVAGQFYPLRCENLENELKRCFEGLEIREQEVLGAVCPHAGYMYSGKVAAHVYATLPEADTYVIFGPNHTGYGSPVSVSRETWKTPLGNIDVDLELADGFLGSIVDADELGHKYEHSIEVQLPFLQYRFERDFKILPICMGMQDEETAVEVGNLLADLISESGKRAVIIASSDFTHYETAERAKEIDSEVIDSILNFDISGMYDRLYRRNASVCGYGPITAMLTASKKLGGSRATLLKYANSGDVSGDKDAVVGYAAIIVE.

The protein belongs to the MEMO1 family.

The protein is MEMO1 family protein MM_1761 of Methanosarcina mazei (strain ATCC BAA-159 / DSM 3647 / Goe1 / Go1 / JCM 11833 / OCM 88) (Methanosarcina frisia).